Here is a 177-residue protein sequence, read N- to C-terminus: Large ribosomal subunit protein bL9 (177 aa).

Residues 151–177 (VEEEPAEEVEAPAETEVAEDAEEATEA) form a disordered region.

This sequence belongs to the bacterial ribosomal protein bL9 family.

Its function is as follows. Binds to the 23S rRNA. The sequence is that of Large ribosomal subunit protein bL9 from Maridesulfovibrio salexigens (strain ATCC 14822 / DSM 2638 / NCIMB 8403 / VKM B-1763) (Desulfovibrio salexigens).